The chain runs to 440 residues: Ribosomal protein uS12 methylthiotransferase RimO (440 aa).

Residues 1-117 (MKIFFISLGC…ITEVIDKVLG (117 aa)) form the MTTase N-terminal domain. Positions 10, 46, 80, 154, 158, and 161 each coordinate [4Fe-4S] cluster. The Radical SAM core domain maps to 140–370 (TTGGYYSFLK…MEIQQGIAFE (231 aa)). Positions 373 to 440 (ESMVGRKLKV…KEYDLIGTAE (68 aa)) constitute a TRAM domain.

This sequence belongs to the methylthiotransferase family. RimO subfamily. [4Fe-4S] cluster serves as cofactor.

It localises to the cytoplasm. The enzyme catalyses L-aspartate(89)-[ribosomal protein uS12]-hydrogen + (sulfur carrier)-SH + AH2 + 2 S-adenosyl-L-methionine = 3-methylsulfanyl-L-aspartate(89)-[ribosomal protein uS12]-hydrogen + (sulfur carrier)-H + 5'-deoxyadenosine + L-methionine + A + S-adenosyl-L-homocysteine + 2 H(+). Catalyzes the methylthiolation of an aspartic acid residue of ribosomal protein uS12. In Lachnoclostridium phytofermentans (strain ATCC 700394 / DSM 18823 / ISDg) (Clostridium phytofermentans), this protein is Ribosomal protein uS12 methylthiotransferase RimO.